The chain runs to 187 residues: Early E3 20.6 kDa glycoprotein (187 aa).

5 N-linked (GlcNAc...) asparagine; by host glycosylation sites follow: asparagine 30, asparagine 73, asparagine 117, asparagine 134, and asparagine 135.

It belongs to the adenoviridae E3_20 family.

This is Early E3 20.6 kDa glycoprotein from Human adenovirus B serotype 11 (strain Slobiski) (HAdV-11).